A 225-amino-acid chain; its full sequence is Urease accessory protein UreF (225 aa).

This sequence belongs to the UreF family. As to quaternary structure, ureD, UreF and UreG form a complex that acts as a GTP-hydrolysis-dependent molecular chaperone, activating the urease apoprotein by helping to assemble the nickel containing metallocenter of UreC. The UreE protein probably delivers the nickel.

The protein localises to the cytoplasm. Its function is as follows. Required for maturation of urease via the functional incorporation of the urease nickel metallocenter. The protein is Urease accessory protein UreF of Geobacillus kaustophilus (strain HTA426).